The sequence spans 446 residues: Probable D-serine dehydratase (446 aa).

Lys116 carries the post-translational modification N6-(pyridoxal phosphate)lysine.

This sequence belongs to the serine/threonine dehydratase family. DsdA subfamily. Requires pyridoxal 5'-phosphate as cofactor.

The enzyme catalyses D-serine = pyruvate + NH4(+). This chain is Probable D-serine dehydratase, found in Bacillus anthracis (strain CDC 684 / NRRL 3495).